We begin with the raw amino-acid sequence, 644 residues long: Exoribonuclease 2 (644 aa).

In terms of domain architecture, RNB spans arginine 189 to threonine 516. Residues aspartate 561–valine 643 enclose the S1 motif domain.

It belongs to the RNR ribonuclease family. RNase II subfamily.

It is found in the cytoplasm. The catalysed reaction is Exonucleolytic cleavage in the 3'- to 5'-direction to yield nucleoside 5'-phosphates.. Functionally, involved in mRNA degradation. Hydrolyzes single-stranded polyribonucleotides processively in the 3' to 5' direction. This Yersinia pseudotuberculosis serotype IB (strain PB1/+) protein is Exoribonuclease 2.